A 71-amino-acid chain; its full sequence is MSKDDLIQFTGTVLELLPNATFRVKLENDHVIIAHTSGRMRKNRIRILLGDKVMVEMTPYDLTKGRVIHRH.

In terms of domain architecture, S1-like spans Met1–His71.

The protein belongs to the IF-1 family. As to quaternary structure, component of the 30S ribosomal translation pre-initiation complex which assembles on the 30S ribosome in the order IF-2 and IF-3, IF-1 and N-formylmethionyl-tRNA(fMet); mRNA recruitment can occur at any time during PIC assembly.

It localises to the cytoplasm. Functionally, one of the essential components for the initiation of protein synthesis. Stabilizes the binding of IF-2 and IF-3 on the 30S subunit to which N-formylmethionyl-tRNA(fMet) subsequently binds. Helps modulate mRNA selection, yielding the 30S pre-initiation complex (PIC). Upon addition of the 50S ribosomal subunit IF-1, IF-2 and IF-3 are released leaving the mature 70S translation initiation complex. The chain is Translation initiation factor IF-1 from Rickettsia conorii (strain ATCC VR-613 / Malish 7).